A 299-amino-acid chain; its full sequence is Nucleophosmin (299 aa).

Positions 125 to 134 are enriched in acidic residues; it reads ESSDDEDEEH. Positions 125 to 247 are disordered; the sequence is ESSDDEDEEH…TPKTPLSSEE (123 aa). The Nuclear localization signal signature appears at 153–158; the sequence is PRKKTR. Residues 160–187 are compositionally biased toward acidic residues; the sequence is EEEEEDSDEDDDDDEDDDDEDDDEEEEE. The span at 188-197 shows a compositional bias: basic and acidic residues; the sequence is TPVKKTDSTK. A Nuclear localization signal motif is present at residues 189 to 195; sequence PVKKTDS. 4 repeats span residues 218-220, 221-223, 237-239, and 240-242; these read KTP. The 4 X 3 AA repeats of K-T-P stretch occupies residues 218 to 242; sequence KTPKTPEQKGKQDTKPQTPKTPKTP. Basic and acidic residues predominate over residues 221–231; the sequence is KTPEQKGKQDT. Low complexity predominate over residues 232–242; that stretch reads KPQTPKTPKTP.

It belongs to the nucleoplasmin family. In terms of assembly, decamer formed by two pentameric rings associated in a head-to-head fashion. In terms of processing, phosphorylated.

The protein resides in the cytoplasm. It localises to the nucleus. Its subcellular location is the nucleoplasm. It is found in the nucleolus. Functionally, acts as a chaperonin for the core histones H3, H2B and H4. Associated with nucleolar ribonucleoprotein structures and bind single-stranded nucleic acids. It may function in the assembly and/or transport of ribosome. May stimulate endonuclease activity on apurinic/apyrimidinic (AP) double-stranded DNA. May inhibit endonuclease activity on AP single-stranded RNA. The sequence is that of Nucleophosmin (npm1) from Xenopus laevis (African clawed frog).